Reading from the N-terminus, the 62-residue chain is Prokaryotic ubiquitin-like protein Pup (62 aa).

Positions 1-36 (MEKSSQIHGSKPGDDNADEPENAAGQSQIRKQGADD) are disordered. The segment at 18 to 56 (DEPENAAGQSQIRKQGADDLLDEIDGLLESNAEEFVRSY) is ARC ATPase binding. At Gln62 the chain carries Deamidated glutamine. Gln62 is covalently cross-linked (Isoglutamyl lysine isopeptide (Gln-Lys) (interchain with K-? in acceptor proteins)).

The protein belongs to the prokaryotic ubiquitin-like protein family. In terms of assembly, strongly interacts with the proteasome-associated ATPase ARC through a hydrophobic interface; the interacting region of Pup lies in its C-terminal half. There is one Pup binding site per ARC hexamer ring. Is modified by deamidation of its C-terminal glutamine to glutamate by the deamidase Dop, a prerequisite to the subsequent pupylation process.

The protein operates within protein degradation; proteasomal Pup-dependent pathway. Functionally, protein modifier that is covalently attached to lysine residues of substrate proteins, thereby targeting them for proteasomal degradation. The tagging system is termed pupylation. This is Prokaryotic ubiquitin-like protein Pup from Corynebacterium kroppenstedtii (strain DSM 44385 / JCM 11950 / CIP 105744 / CCUG 35717).